The chain runs to 419 residues: UDP-N-acetylglucosamine 1-carboxyvinyltransferase (419 aa).

Position 22–23 (22–23) interacts with phosphoenolpyruvate; it reads KN. Residue Arg93 coordinates UDP-N-acetyl-alpha-D-glucosamine. The Proton donor role is filled by Cys117. Cys117 is modified (2-(S-cysteinyl)pyruvic acid O-phosphothioketal). The UDP-N-acetyl-alpha-D-glucosamine site is built by Asp306 and Ile328.

This sequence belongs to the EPSP synthase family. MurA subfamily.

The protein resides in the cytoplasm. The catalysed reaction is phosphoenolpyruvate + UDP-N-acetyl-alpha-D-glucosamine = UDP-N-acetyl-3-O-(1-carboxyvinyl)-alpha-D-glucosamine + phosphate. Its pathway is cell wall biogenesis; peptidoglycan biosynthesis. In terms of biological role, cell wall formation. Adds enolpyruvyl to UDP-N-acetylglucosamine. The polypeptide is UDP-N-acetylglucosamine 1-carboxyvinyltransferase (Vesicomyosocius okutanii subsp. Calyptogena okutanii (strain HA)).